The following is a 187-amino-acid chain: Shikimate kinase (187 aa).

Gly-14–Thr-19 is a binding site for ATP. Ser-18 contributes to the Mg(2+) binding site. Residues Asp-36, Arg-60, and Gly-82 each contribute to the substrate site. Arg-120 contacts ATP. Residue Arg-147 coordinates substrate.

It belongs to the shikimate kinase family. Monomer. Requires Mg(2+) as cofactor.

It is found in the cytoplasm. It carries out the reaction shikimate + ATP = 3-phosphoshikimate + ADP + H(+). Its pathway is metabolic intermediate biosynthesis; chorismate biosynthesis; chorismate from D-erythrose 4-phosphate and phosphoenolpyruvate: step 5/7. In terms of biological role, catalyzes the specific phosphorylation of the 3-hydroxyl group of shikimic acid using ATP as a cosubstrate. This chain is Shikimate kinase, found in Chlorobaculum parvum (strain DSM 263 / NCIMB 8327) (Chlorobium vibrioforme subsp. thiosulfatophilum).